The primary structure comprises 158 residues: Cytochrome c-type biogenesis protein CcmE (158 aa).

Residues 1–8 (MNIRRRRR) are Cytoplasmic-facing. The helical; Signal-anchor for type II membrane protein transmembrane segment at 9–29 (LLVVVAILVGLGLATGLVMYA) threads the bilayer. At 30 to 158 (LRSNIDLFYT…GLLNVSEPTR (129 aa)) the chain is on the periplasmic side. Residues histidine 130 and tyrosine 134 each coordinate heme.

This sequence belongs to the CcmE/CycJ family.

It localises to the cell inner membrane. Heme chaperone required for the biogenesis of c-type cytochromes. Transiently binds heme delivered by CcmC and transfers the heme to apo-cytochromes in a process facilitated by CcmF and CcmH. This is Cytochrome c-type biogenesis protein CcmE from Tatumella citrea (Pantoea citrea).